The sequence spans 30 residues: Alanine carboxypeptidase (30 aa).

It carries out the reaction Release of a C-terminal alanine from a peptide or a variety of pteroyl or acyl groups.. This chain is Alanine carboxypeptidase, found in Geobacillus stearothermophilus (Bacillus stearothermophilus).